A 1044-amino-acid chain; its full sequence is Sarcoplasmic/endoplasmic reticulum calcium ATPase 2 (1044 aa).

The Cytoplasmic segment spans residues 1 to 48 (MENAHTKTVEEVLGHFGVNESTGLSLEQVKKLKERWGSNELPAEEGKT). S38 carries the phosphoserine modification. The helical transmembrane segment at 49–69 (LLELVIEQFEDLLVRILLLAA) threads the bilayer. Residues 70–89 (CISFVLAWFEEGEETITAFV) lie on the Lumenal side of the membrane. Residues 90–110 (EPFVILLILVANAIVGVWQER) form a helical membrane-spanning segment. The Cytoplasmic portion of the chain corresponds to 111–253 (NAENAIEALK…QERTPLQQKL (143 aa)). A helical transmembrane segment spans residues 254 to 273 (DEFGEQLSKVISLICIAVWI). The Lumenal segment spans residues 274–295 (INIGHFNDPVHGGSWIRGAIYY). 3'-nitrotyrosine is present on residues Y294 and Y295. Residues 296 to 313 (FKIAVALAVAAIPEGLPA) traverse the membrane as a helical segment. Residues V304, A305, I307, and E309 each coordinate Ca(2+). Residues 314-756 (VITTCLALGT…EEGRAIYNNM (443 aa)) are Cytoplasmic-facing. D351 functions as the 4-aspartylphosphate intermediate in the catalytic mechanism. The Mg(2+) site is built by D351 and T353. T353 contributes to the ATP binding site. The residue at position 441 (T441) is a Phosphothreonine. 3 residues coordinate ATP: E442, R489, and K514. Phosphoserine is present on S531. Residue R559 participates in ATP binding. The segment at 575-594 (MHLEDSANFIKYETNLTFVG) is interaction with HAX1. Phosphoserine is present on S580. ATP contacts are provided by T624, G625, and D626. Phosphoserine is present on residues S661 and S663. ATP contacts are provided by R677 and K683. D702 lines the Mg(2+) pocket. N705 is an ATP binding site. Residues 757 to 776 (KQFIRYLISSNVGEVVCIFL) traverse the membrane as a helical segment. Positions 767 and 770 each coordinate Ca(2+). Over 777–786 (TAALGFPEAL) the chain is Lumenal. A helical membrane pass occupies residues 787–807 (IPVQLLWVNLVTDGLPATALG). The tract at residues 787-807 (IPVQLLWVNLVTDGLPATALG) is interaction with PLN. The segment at 788 to 1044 (PVQLLWVNLV…DTNFSDMFWS (257 aa)) is interaction with TMEM64 and PDIA3. Ca(2+) contacts are provided by N795, T798, and D799. At 808 to 827 (FNPPDLDIMNKPPRNPKEPL) the chain is on the cytoplasmic side. A helical membrane pass occupies residues 828–850 (ISGWLFFRYLAIGCYVGAATVGA). Over 851 to 896 (AAWWFIAADGGPRVSFYQLSHFLQCKEDNPDFDGVDCAIFESPYPM) the chain is Lumenal. An intrachain disulfide couples C875 to C887. Residues 897-916 (TMALSVLVTIEMCNALNSLS) form a helical membrane-spanning segment. E907 serves as a coordination point for Ca(2+). Topologically, residues 917-929 (ENQSLLRMPPWEN) are cytoplasmic. The helical transmembrane segment at 930 to 948 (IWLVGSICLSMSLHFLILY) threads the bilayer. The interaction with PLN stretch occupies residues 931–942 (WLVGSICLSMSL). The Lumenal portion of the chain corresponds to 949 to 963 (VEPLPLIFQITPLNL). The chain crosses the membrane as a helical span at residues 964 to 984 (TQWLMVLKISLPVILMDETLK). Topologically, residues 985–1044 (FVARNYLEQPGKECVQPATKSSCSLSACTDGISWPFVLLIMPLVVWVYSTDTNFSDMFWS) are cytoplasmic.

Belongs to the cation transport ATPase (P-type) (TC 3.A.3) family. Type IIA subfamily. In terms of assembly, interacts with sarcolipin (SLN); the interaction inhibits ATP2A2 Ca(2+) affinity. Interacts with phospholamban (PLN); the interaction inhibits ATP2A2 Ca(2+) affinity. Interacts with myoregulin (MRLN). Interacts with ARLN and ERLN; the interactions inhibit ATP2A2 Ca(2+) affinity. Interacts with STRIT1/DWORF; the interaction results in activation of ATP2A2. Interacts with the monomeric forms of SLN, PLN, ARLN, ERLN and STRI1/DWORF. Interacts with HAX1. Interacts with S100A8 and S100A9. Interacts with SLC35G1 and STIM1. Interacts with TMEM203. Interacts with TMEM64 and PDIA3. Interacts with TMX1. Interacts with TMX2. Interacts with VMP1; VMP1 competes with PLN and SLN to prevent them from forming an inhibitory complex with ATP2A2. Interacts with ULK1. Interacts with S100A1 in a Ca(2+)-dependent manner. Interacts with TUNAR. Interacts with FLVCR2; this interaction occurs in the absence of heme and promotes ATP2A2 proteasomal degradation; this complex is dissociated upon heme binding. Interacts with FNIP1. As to quaternary structure, interacts with TRAM2 (via C-terminus). Requires Mg(2+) as cofactor. Post-translationally, nitrated under oxidative stress. Nitration on the two tyrosine residues inhibits catalytic activity. Serotonylated on Gln residues by TGM2 in response to hypoxia, leading to its inactivation. Isoform 2 is highly expressed in heart and slow twitch skeletal muscle. Isoform 2 is widely expressed.

The protein localises to the endoplasmic reticulum membrane. It localises to the sarcoplasmic reticulum membrane. The enzyme catalyses Ca(2+)(in) + ATP + H2O = Ca(2+)(out) + ADP + phosphate + H(+). With respect to regulation, has different conformational states with differential Ca2+ affinity. The E1 conformational state (active form) shows high Ca(2+) affinity, while the E2 state exhibits low Ca(2+) affinity. Binding of ATP allosterically increases its affinity for subsequent binding of Ca2+. Reversibly inhibited by phospholamban (PLN) at low calcium concentrations. PLN inhibits ATP2A2 Ca(2+) affinity by disrupting its allosteric activation by ATP. Inhibited by sarcolipin (SLN) and myoregulin (MRLN). The inhibition is blocked by VMP1. Enhanced by STRIT1/DWORF; STRIT1 increases activity by displacing sarcolipin (SLN), phospholamban (PLN) and myoregulin (MRLN). Stabilizes SERCA2 in its E2 state. In terms of biological role, this magnesium-dependent enzyme catalyzes the hydrolysis of ATP coupled with the translocation of calcium from the cytosol to the sarcoplasmic reticulum lumen. Involved in autophagy in response to starvation. Upon interaction with VMP1 and activation, controls ER-isolation membrane contacts for autophagosome formation. Also modulates ER contacts with lipid droplets, mitochondria and endosomes. In coordination with FLVCR2 mediates heme-stimulated switching from mitochondrial ATP synthesis to thermogenesis. Its function is as follows. Involved in the regulation of the contraction/relaxation cycle. Acts as a regulator of TNFSF11-mediated Ca(2+) signaling pathways via its interaction with TMEM64 which is critical for the TNFSF11-induced CREB1 activation and mitochondrial ROS generation necessary for proper osteoclast generation. Association between TMEM64 and SERCA2 in the ER leads to cytosolic Ca(2+) spiking for activation of NFATC1 and production of mitochondrial ROS, thereby triggering Ca(2+) signaling cascades that promote osteoclast differentiation and activation. The protein is Sarcoplasmic/endoplasmic reticulum calcium ATPase 2 of Mus musculus (Mouse).